The following is a 701-amino-acid chain: Elongation factor G (701 aa).

Residues 11-287 (TKVRNIGIMA…AVIDYLPSPL (277 aa)) form the tr-type G domain. Residues 20–27 (AHIDAGKT), 84–88 (DTPGH), and 138–141 (NKMD) each bind GTP.

Belongs to the TRAFAC class translation factor GTPase superfamily. Classic translation factor GTPase family. EF-G/EF-2 subfamily.

The protein localises to the cytoplasm. Catalyzes the GTP-dependent ribosomal translocation step during translation elongation. During this step, the ribosome changes from the pre-translocational (PRE) to the post-translocational (POST) state as the newly formed A-site-bound peptidyl-tRNA and P-site-bound deacylated tRNA move to the P and E sites, respectively. Catalyzes the coordinated movement of the two tRNA molecules, the mRNA and conformational changes in the ribosome. This is Elongation factor G from Mycobacterium leprae (strain Br4923).